The chain runs to 306 residues: tRNA-cytidine(32) 2-sulfurtransferase (306 aa).

The PP-loop motif motif lies at 49–54 (SGGKDS). Cys124, Cys127, and Cys215 together coordinate [4Fe-4S] cluster.

The protein belongs to the TtcA family. As to quaternary structure, homodimer. The cofactor is Mg(2+). [4Fe-4S] cluster serves as cofactor.

It localises to the cytoplasm. It catalyses the reaction cytidine(32) in tRNA + S-sulfanyl-L-cysteinyl-[cysteine desulfurase] + AH2 + ATP = 2-thiocytidine(32) in tRNA + L-cysteinyl-[cysteine desulfurase] + A + AMP + diphosphate + H(+). The protein operates within tRNA modification. Catalyzes the ATP-dependent 2-thiolation of cytidine in position 32 of tRNA, to form 2-thiocytidine (s(2)C32). The sulfur atoms are provided by the cysteine/cysteine desulfurase (IscS) system. This Azoarcus sp. (strain BH72) protein is tRNA-cytidine(32) 2-sulfurtransferase.